A 138-amino-acid polypeptide reads, in one-letter code: Small ribosomal subunit protein uS11 (138 aa).

Residues 1-12 (MAKQSAKGSTTT) show a composition bias toward polar residues. The disordered stretch occupies residues 1-37 (MAKQSAKGSTTTKRQRGKRREKKNVPRGQAHIQSTFN). Basic residues predominate over residues 13-22 (KRQRGKRREK).

Belongs to the universal ribosomal protein uS11 family. In terms of assembly, part of the 30S ribosomal subunit. Interacts with proteins S7 and S18. Binds to IF-3.

Its function is as follows. Located on the platform of the 30S subunit, it bridges several disparate RNA helices of the 16S rRNA. Forms part of the Shine-Dalgarno cleft in the 70S ribosome. The sequence is that of Small ribosomal subunit protein uS11 from Roseiflexus castenholzii (strain DSM 13941 / HLO8).